The chain runs to 162 residues: Lipoprotein signal peptidase (162 aa).

2 helical membrane passes run P66 to L86 and L92 to V112. Residues D119 and D137 contribute to the active site. A helical transmembrane segment spans residues A132–I152.

The protein belongs to the peptidase A8 family.

It is found in the cell inner membrane. The catalysed reaction is Release of signal peptides from bacterial membrane prolipoproteins. Hydrolyzes -Xaa-Yaa-Zaa-|-(S,diacylglyceryl)Cys-, in which Xaa is hydrophobic (preferably Leu), and Yaa (Ala or Ser) and Zaa (Gly or Ala) have small, neutral side chains.. Its pathway is protein modification; lipoprotein biosynthesis (signal peptide cleavage). Its function is as follows. This protein specifically catalyzes the removal of signal peptides from prolipoproteins. This Geobacter metallireducens (strain ATCC 53774 / DSM 7210 / GS-15) protein is Lipoprotein signal peptidase.